The chain runs to 791 residues: Penicillin-binding protein 1A (791 aa).

The Cytoplasmic segment spans residues 1–6; it reads MYKSLF. Residues 7 to 27 traverse the membrane as a helical; Signal-anchor for type II membrane protein segment; that stretch reads FCLKILALLFLIGCGIVAYII. Over 28–791 the chain is Periplasmic; it reads YYYSRDLPDY…TEKDQSQEIY (764 aa). Residues 49-220 are transglycosylase; that stretch reads TRIYSRDGKL…SELNPEKNYA (172 aa). The Proton donor; for transglycosylase activity role is filled by Glu87. The tract at residues 398-711 is transpeptidase; the sequence is DVIVVEPVKD…SSVVLPIFID (314 aa). The Acyl-ester intermediate; for transpeptidase activity role is filled by Ser457.

This sequence in the N-terminal section; belongs to the glycosyltransferase 51 family. The protein in the C-terminal section; belongs to the transpeptidase family.

It localises to the cell inner membrane. It carries out the reaction [GlcNAc-(1-&gt;4)-Mur2Ac(oyl-L-Ala-gamma-D-Glu-L-Lys-D-Ala-D-Ala)](n)-di-trans,octa-cis-undecaprenyl diphosphate + beta-D-GlcNAc-(1-&gt;4)-Mur2Ac(oyl-L-Ala-gamma-D-Glu-L-Lys-D-Ala-D-Ala)-di-trans,octa-cis-undecaprenyl diphosphate = [GlcNAc-(1-&gt;4)-Mur2Ac(oyl-L-Ala-gamma-D-Glu-L-Lys-D-Ala-D-Ala)](n+1)-di-trans,octa-cis-undecaprenyl diphosphate + di-trans,octa-cis-undecaprenyl diphosphate + H(+). The catalysed reaction is Preferential cleavage: (Ac)2-L-Lys-D-Ala-|-D-Ala. Also transpeptidation of peptidyl-alanyl moieties that are N-acyl substituents of D-alanine.. Its pathway is cell wall biogenesis; peptidoglycan biosynthesis. Cell wall formation. Synthesis of cross-linked peptidoglycan from the lipid intermediates. The enzyme has a penicillin-insensitive transglycosylase N-terminal domain (formation of linear glycan strands) and a penicillin-sensitive transpeptidase C-terminal domain (cross-linking of the peptide subunits). This Rickettsia bellii (strain RML369-C) protein is Penicillin-binding protein 1A (mrcA).